Consider the following 586-residue polypeptide: Glutathione hydrolase 5 proenzyme (586 aa).

The Cytoplasmic portion of the chain corresponds to Met1–Thr8. The chain crosses the membrane as a helical; Signal-anchor for type II membrane protein span at residues Val9–Leu29. Residues Ser30–Tyr586 are Extracellular-facing. N-linked (GlcNAc...) asparagine glycosylation is present at Asn98. Arg110 serves as a coordination point for L-glutamate. Asn204, Asn303, and Asn347 each carry an N-linked (GlcNAc...) asparagine glycan. Thr388 serves as the catalytic Nucleophile. L-glutamate-binding positions include Thr406, Glu427, and Ser469–Ser470. N-linked (GlcNAc...) asparagine glycosylation is found at Asn535 and Asn550.

Belongs to the gamma-glutamyltransferase family. As to quaternary structure, heterodimer composed of the light and heavy chains. The active site is located in the light chain. Cleaved by autocatalysis into a large and a small subunit. In terms of processing, glycosylated. Expressed in follicular dendritic cells in lymphoid follicles (at protein level).

It localises to the membrane. The enzyme catalyses glutathione + H2O = L-cysteinylglycine + L-glutamate. It carries out the reaction an S-substituted glutathione + H2O = an S-substituted L-cysteinylglycine + L-glutamate. It catalyses the reaction leukotriene C4 + H2O = leukotriene D4 + L-glutamate. The catalysed reaction is S-[(2E,6E,10E)-geranylgeranyl]-L-glutathione + H2O = S-[(2E,6E,10E)-geranylgeranyl]-L-cysteinylglycine + L-glutamate. The enzyme catalyses an N-terminal (5-L-glutamyl)-[peptide] + an alpha-amino acid = 5-L-glutamyl amino acid + an N-terminal L-alpha-aminoacyl-[peptide]. It participates in sulfur metabolism; glutathione metabolism. The protein operates within lipid metabolism; leukotriene D4 biosynthesis. Inhibited by serine-borate. In terms of biological role, cleaves the gamma-glutamyl bond of extracellular glutathione tripeptide (gamma-Glu-Cys-Gly) and certain glutathione conjugates. Hydrolyzes glutathione releasing L-Glu and Cys-Gly dipeptide which is further metabolized to maintain extracellular cysteine levels but also to provide cysteine necessary for intracellular glutathione synthesis. Among glutathione-S-conjugates metabolizes leukotriene C4 (LTC4) and S-geranylgeranyl-glutathione (GGG), but is inactive toward gamma-glutamyl leucine. Converts extracellular LTC4 to LTD4 during acute inflammatory response. Acts as a negative regulator of GGG bioactivity. GGT5 (via GGG catabolism) and ABCC1 (via extracellular transport) establish GGG gradients within lymphoid tissues to position P2RY8-positive lymphocytes at germinal centers in lymphoid follicles and restrict their chemotactic transmigration from blood vessels to bone marrow parenchyma. The transpeptidation reaction, i.e. the transfer of gamma-glutamyl moiety to an acceptor molecule to yield a new gamma-glutamyl compound requires high concentration of dipeptide acceptor and is considered nonphysiological. The polypeptide is Glutathione hydrolase 5 proenzyme (GGT5) (Homo sapiens (Human)).